A 290-amino-acid chain; its full sequence is Arylamine N-acetyltransferase 2 (290 aa).

The active-site Acyl-thioester intermediate is cysteine 68. Residues threonine 103 and glycine 104 each coordinate CoA. 106–107 (VH) lines the substrate pocket. Residues histidine 107 and aspartate 122 contribute to the active site. Tyrosine 208, threonine 214, and serine 287 together coordinate CoA.

This sequence belongs to the arylamine N-acetyltransferase family.

It localises to the cytoplasm. It catalyses the reaction an arylamine + acetyl-CoA = an N-acetylarylamine + CoA. The catalysed reaction is an N-hydroxyarylamine + acetyl-CoA = an N-acetoxyarylamine + CoA. Its function is as follows. Catalyzes the N- or O-acetylation of various arylamine and heterocyclic amine substrates. Participates in the detoxification of a plethora of hydrazine and arylamine drugs, and is able to bioactivate several known carcinogens. The chain is Arylamine N-acetyltransferase 2 (NAT2) from Homo sapiens (Human).